The following is a 161-amino-acid chain: Calmodulin-like protein (161 aa).

EF-hand domains follow at residues 21–56 (EEID…LGQN), 57–92 (PTEQ…MMKE), 93–128 (TDSE…MGMQ), and 129–161 (FSEE…MSNQ). 19 residues coordinate Ca(2+): Asp34, Asp36, Asn38, Thr40, Glu45, Asp70, Asp72, Asn74, Gln76, Glu81, Asp106, Asp108, Asn110, Glu117, Asp142, Asp144, Asp146, Glu148, and Glu153.

The protein belongs to the calmodulin family.

Its function is as follows. This protein resembles calmodulin in sequence but possibly resembles troponin C in function. This is Calmodulin-like protein (cal-1) from Caenorhabditis elegans.